A 718-amino-acid chain; its full sequence is Homeobox-leucine zipper protein HDG9 (718 aa).

A compositionally biased stretch (basic and acidic residues) spans 1–12 (MDFTRDDNSSDE). The disordered stretch occupies residues 1 to 35 (MDFTRDDNSSDERENDVDANTNNRHEKKGYHRHTN). The homeobox DNA-binding region spans 26 to 85 (EKKGYHRHTNEQIHRLETYFKECPHPDEFQRRLLGEELNLKPKQIKFWFQNKRTQAKSHN). A coiled-coil region spans residues 78–152 (RTQAKSHNEK…LKDEYERVSN (75 aa)). Residues 169–209 (PYLHGPSNHASTSKNRPALYGTSSNRLPEPSSIFRGPYTRG) form a disordered region. Over residues 176 to 194 (NHASTSKNRPALYGTSSNR) the composition is skewed to polar residues. One can recognise an START domain in the interval 232–464 (SQLEKIAMLE…LERTCERLIF (233 aa)).

This sequence belongs to the HD-ZIP homeobox family. Class IV subfamily. As to expression, expressed in anthers with highest levels in the tapetum and pollen grains, and chalazal end of the embryo sac.

The protein localises to the nucleus. Probable transcription factor that binds to the DNA sequence 5'-GCATTAAATGCGCA-3'. This Arabidopsis thaliana (Mouse-ear cress) protein is Homeobox-leucine zipper protein HDG9 (HDG9).